Consider the following 173-residue polypeptide: Bifunctional protein PyrR (173 aa).

The PRPP-binding motif lies at 94-106 (VILIDDVLYTGRT).

Belongs to the purine/pyrimidine phosphoribosyltransferase family. PyrR subfamily. In terms of assembly, homodimer and homohexamer; in equilibrium.

The catalysed reaction is UMP + diphosphate = 5-phospho-alpha-D-ribose 1-diphosphate + uracil. Regulates transcriptional attenuation of the pyrimidine nucleotide (pyr) operon by binding in a uridine-dependent manner to specific sites on pyr mRNA. This disrupts an antiterminator hairpin in the RNA and favors formation of a downstream transcription terminator, leading to a reduced expression of downstream genes. Its function is as follows. Also displays a weak uracil phosphoribosyltransferase activity which is not physiologically significant. The sequence is that of Bifunctional protein PyrR from Streptococcus gordonii (strain Challis / ATCC 35105 / BCRC 15272 / CH1 / DL1 / V288).